The chain runs to 618 residues: Elongation factor 4 (618 aa).

The tr-type G domain maps to 17 to 198 (AIIRNFCIIA…KIVRDLPAPE (182 aa)). GTP-binding positions include 29–34 (DHGKST) and 145–148 (NKID).

It belongs to the TRAFAC class translation factor GTPase superfamily. Classic translation factor GTPase family. LepA subfamily.

The protein resides in the cell membrane. It catalyses the reaction GTP + H2O = GDP + phosphate + H(+). In terms of biological role, required for accurate and efficient protein synthesis under certain stress conditions. May act as a fidelity factor of the translation reaction, by catalyzing a one-codon backward translocation of tRNAs on improperly translocated ribosomes. Back-translocation proceeds from a post-translocation (POST) complex to a pre-translocation (PRE) complex, thus giving elongation factor G a second chance to translocate the tRNAs correctly. Binds to ribosomes in a GTP-dependent manner. The chain is Elongation factor 4 from Pseudarthrobacter chlorophenolicus (strain ATCC 700700 / DSM 12829 / CIP 107037 / JCM 12360 / KCTC 9906 / NCIMB 13794 / A6) (Arthrobacter chlorophenolicus).